We begin with the raw amino-acid sequence, 199 residues long: Chaperone protein TorD (199 aa).

This sequence belongs to the TorD/DmsD family. TorD subfamily.

The protein localises to the cytoplasm. Functionally, involved in the biogenesis of TorA. Acts on TorA before the insertion of the molybdenum cofactor and, as a result, probably favors a conformation of the apoenzyme that is competent for acquiring the cofactor. This is Chaperone protein TorD from Shigella dysenteriae serotype 1 (strain Sd197).